The primary structure comprises 21 residues: Paulistine (21 aa).

Cys7 and Cys14 are disulfide-bonded. At Thr21 the chain carries Threonine amide.

The protein belongs to the sylv/frat/paul family. Occurs in oxidized and reduced states which are thought to adopt a compact globular and linear structure, respectively.

Its function is as follows. Induces transient hyperalgesia and paw edema in mice. Probably exerts its effects via different pathways in an oxidation state-dependent way. The protein is Paulistine of Polybia paulista (Neotropical social wasp).